The primary structure comprises 180 residues: Large ribosomal subunit protein uL6 (180 aa).

It belongs to the universal ribosomal protein uL6 family. As to quaternary structure, part of the 50S ribosomal subunit.

Its function is as follows. This protein binds to the 23S rRNA, and is important in its secondary structure. It is located near the subunit interface in the base of the L7/L12 stalk, and near the tRNA binding site of the peptidyltransferase center. This is Large ribosomal subunit protein uL6 from Clostridium beijerinckii (strain ATCC 51743 / NCIMB 8052) (Clostridium acetobutylicum).